The primary structure comprises 110 residues: Senescence associated gene 20 (110 aa).

The protein is Senescence associated gene 20 of Arabidopsis thaliana (Mouse-ear cress).